The primary structure comprises 378 residues: Chorismate synthase (378 aa).

NADP(+)-binding residues include Arg-48 and Arg-54. FMN contacts are provided by residues 125–127 (RSS), 238–239 (NA), Gly-278, 293–297 (KPTSS), and Arg-319.

The protein belongs to the chorismate synthase family. In terms of assembly, homotetramer. The cofactor is FMNH2.

The catalysed reaction is 5-O-(1-carboxyvinyl)-3-phosphoshikimate = chorismate + phosphate. It functions in the pathway metabolic intermediate biosynthesis; chorismate biosynthesis; chorismate from D-erythrose 4-phosphate and phosphoenolpyruvate: step 7/7. Functionally, catalyzes the anti-1,4-elimination of the C-3 phosphate and the C-6 proR hydrogen from 5-enolpyruvylshikimate-3-phosphate (EPSP) to yield chorismate, which is the branch point compound that serves as the starting substrate for the three terminal pathways of aromatic amino acid biosynthesis. This reaction introduces a second double bond into the aromatic ring system. The chain is Chorismate synthase from Azoarcus sp. (strain BH72).